The chain runs to 558 residues: DNA ligase B (558 aa).

Lys-126 functions as the N6-AMP-lysine intermediate in the catalytic mechanism.

It belongs to the NAD-dependent DNA ligase family. LigB subfamily.

The enzyme catalyses NAD(+) + (deoxyribonucleotide)n-3'-hydroxyl + 5'-phospho-(deoxyribonucleotide)m = (deoxyribonucleotide)n+m + AMP + beta-nicotinamide D-nucleotide.. Functionally, catalyzes the formation of phosphodiester linkages between 5'-phosphoryl and 3'-hydroxyl groups in double-stranded DNA using NAD as a coenzyme and as the energy source for the reaction. This chain is DNA ligase B, found in Pseudomonas fluorescens (strain Pf0-1).